The primary structure comprises 400 residues: Leucine-rich repeat flightless-interacting protein 2 (400 aa).

Disordered stretches follow at residues 1 to 28 and 53 to 119; these read MGTPGSGRKRTPVKDRFSAEDEALSNID and LERQ…LSEV. Ser-18 is modified (phosphoserine). The stretch at 29 to 71 forms a coiled coil; it reads REAEARLAAKRAARAEARDIRMRELERQQKELDEKSDKQYAEN. The span at 53 to 68 shows a compositional bias: basic and acidic residues; that stretch reads LERQQKELDEKSDKQY. Residues 73–102 are compositionally biased toward polar residues; it reads TRPSSRNSASATTPLSGNSSRRVSGDTSSL. Ser-77, Ser-80, Ser-88, Ser-92, and Ser-96 each carry phosphoserine. Residue Thr-99 is modified to Phosphothreonine. A phosphoserine mark is found at Ser-100 and Ser-101. Coiled coils occupy residues 106–202 and 245–393; these read DTSL…LIEK and LDVR…KANR.

The protein belongs to the LRRFIP family. As to quaternary structure, interacts with DVL3 and FLII. Weakly interacts with MYD88 in resting cells. Following LPS-stimulation, the interaction with MYD88 is rapidly enhanced; the complex gradually dissociates to basal levels after 6 hours of stimulation. Interaction with MYD88 is regulated by LPS-induced phosphorylation. In the presence of LPS, competes with FLII for MYD88-binding.

In terms of biological role, may function as activator of the canonical Wnt signaling pathway, in association with DVL3, upstream of CTNNB1/beta-catenin. Positively regulates Toll-like receptor (TLR) signaling in response to agonist probably by competing with the negative FLII regulator for MYD88-binding. The chain is Leucine-rich repeat flightless-interacting protein 2 (LRRFIP2) from Bos taurus (Bovine).